The sequence spans 355 residues: Uroporphyrinogen decarboxylase (355 aa).

Substrate contacts are provided by residues 27 to 31, Phe46, Asp77, Tyr154, Thr209, and His328; that span reads RQAGR.

This sequence belongs to the uroporphyrinogen decarboxylase family. As to quaternary structure, homodimer.

Its subcellular location is the cytoplasm. The catalysed reaction is uroporphyrinogen III + 4 H(+) = coproporphyrinogen III + 4 CO2. It participates in porphyrin-containing compound metabolism; protoporphyrin-IX biosynthesis; coproporphyrinogen-III from 5-aminolevulinate: step 4/4. Functionally, catalyzes the decarboxylation of four acetate groups of uroporphyrinogen-III to yield coproporphyrinogen-III. In Vibrio vulnificus (strain CMCP6), this protein is Uroporphyrinogen decarboxylase.